The chain runs to 331 residues: tRNA-cytidine(32) 2-sulfurtransferase (331 aa).

Positions 71–76 (SGGKDS) match the PP-loop motif motif. [4Fe-4S] cluster-binding residues include C146, C149, and C237.

It belongs to the TtcA family. In terms of assembly, homodimer. Requires Mg(2+) as cofactor. It depends on [4Fe-4S] cluster as a cofactor.

It is found in the cytoplasm. The enzyme catalyses cytidine(32) in tRNA + S-sulfanyl-L-cysteinyl-[cysteine desulfurase] + AH2 + ATP = 2-thiocytidine(32) in tRNA + L-cysteinyl-[cysteine desulfurase] + A + AMP + diphosphate + H(+). It participates in tRNA modification. In terms of biological role, catalyzes the ATP-dependent 2-thiolation of cytidine in position 32 of tRNA, to form 2-thiocytidine (s(2)C32). The sulfur atoms are provided by the cysteine/cysteine desulfurase (IscS) system. The chain is tRNA-cytidine(32) 2-sulfurtransferase from Burkholderia multivorans (strain ATCC 17616 / 249).